A 1923-amino-acid chain; its full sequence is Endoribonuclease Dicer (1923 aa).

The Helicase ATP-binding domain maps to 51-227; the sequence is LLEAALDHNT…ELEEKIQKLE (177 aa). 64 to 71 serves as a coordination point for ATP; it reads LNTGSGKT. Positions 175 to 178 match the DECH box motif; the sequence is DECH. The segment at 256 to 595 is required for interaction with PRKRA and TARBP2; the sequence is DCGPFTDRSG…LRNKCSKSVD (340 aa). Positions 410 to 433 are disordered; it reads VSWSDSEDDEEDEEIEEKEKPETN. Ser-413 and Ser-415 each carry phosphoserine. Positions 414-425 are enriched in acidic residues; that stretch reads DSEDDEEDEEIE. Positions 433–602 constitute a Helicase C-terminal domain; it reads NFPSPFTNIL…SVDTGEADTE (170 aa). One can recognise a Dicer dsRNA-binding fold domain in the interval 629-721; sequence AIGHVNRYCA…MPVGKETVKY (93 aa). The 148-residue stretch at 894 to 1041 folds into the PAZ domain; sequence KFMEDIEKSE…LVPELCAIHP (148 aa). 2 positions are modified to phosphoserine: Ser-1015 and Ser-1160. Composition is skewed to polar residues over residues 1246-1255 and 1277-1290; these read NANTSTSDGS and SEQSPSPGYSSRTL. The tract at residues 1246 to 1291 is disordered; sequence NANTSTSDGSPVTAAVPGTTETGEAPPDRTASEQSPSPGYSSRTLG. Residues 1276 to 1404 enclose the RNase III 1 domain; it reads ASEQSPSPGY…TEKWEKDEMT (129 aa). Glu-1316, Glu-1396, and Glu-1399 together coordinate Mg(2+). Phosphoserine is present on residues Ser-1461, Ser-1469, and Ser-1471. Residues 1667-1825 form the RNase III 2 domain; sequence FENFEKKINY…LAGAIYMDSG (159 aa). Mg(2+) contacts are provided by Glu-1706, Asp-1811, and Glu-1814. The DRBM domain maps to 1853-1915; that stretch reads SPVRELLEME…ARRALRSLKA (63 aa). A Phosphoserine modification is found at Ser-1869.

It belongs to the helicase family. Dicer subfamily. Component of the RISC loading complex (RLC), or micro-RNA (miRNA) loading complex (miRLC), which is composed of DICER1, AGO2 and TARBP2; DICER1 and TARBP2 are required to process precursor miRNAs (pre-miRNAs) to mature miRNAs and then load them onto AGO2. Note that the trimeric RLC/miRLC is also referred to as RISC. Interacts with DHX9, AGO1, PIWIL1 and PRKRA. Interacts with AGO2, TARBP2, EIF6, MOV10 and RPL7A (60S ribosome subunit); they form a large RNA-induced silencing complex (RISC). Interacts with BCDIN3D. Interacts (via Dicer dsRNA-binding fold domain) with ALOX5 (via PLAT domain); this interaction enhances arachidonate 5-lipoxygenase activity and modifies the miRNA precursor processing activity of DICER1. The cofactor is Mg(2+). Mn(2+) serves as cofactor.

Its subcellular location is the cytoplasm. It carries out the reaction Endonucleolytic cleavage to 5'-phosphomonoester.. Its function is as follows. Double-stranded RNA (dsRNA) endoribonuclease playing a central role in short dsRNA-mediated post-transcriptional gene silencing. Cleaves naturally occurring long dsRNAs and short hairpin pre-microRNAs (miRNA) into fragments of twenty-one to twenty-three nucleotides with 3' overhang of two nucleotides, producing respectively short interfering RNAs (siRNA) and mature microRNAs. SiRNAs and miRNAs serve as guide to direct the RNA-induced silencing complex (RISC) to complementary RNAs to degrade them or prevent their translation. Gene silencing mediated by siRNAs, also called RNA interference, controls the elimination of transcripts from mobile and repetitive DNA elements of the genome but also the degradation of exogenous RNA of viral origin for instance. The miRNA pathway on the other side is a mean to specifically regulate the expression of target genes. The polypeptide is Endoribonuclease Dicer (DICER1) (Bos taurus (Bovine)).